Reading from the N-terminus, the 471-residue chain is MTTPQEVLKLIQDQKIQMIDLKFIDTPGTWQHLTVYYNQIDESSFTDGVPFDGSSIRGWKGIEESDMTMVLDPNTAWIDPFMKEPTLSIICSIKEPRTGEWYNRCPRVIAQKAIDYLVSTGLGDTAFFGPEAEFFIFDDARFDQTANSGYYYVDSVEGRWNSGKDEGPNLAYKPRFKEGYFPVAPTDTFQDMRTEMLLTMAACGVPIEKQHHEVATGGQCELGFRFGKLIEAADWLMTYKYVIKNVAKKYGRTVTFMPKPIFGDNGSGMHCHQSIWKDGKPLFGGDKYAGLSDMALYYIGGILKHAPALLGITNPTTNSYKRLVPGYEAPVNLAYSQGNRSASVRIPLSGTNPKAKRLEFRCPDATSNPYLAFAAMLCAGIDGIKNKIHPGEPLDRNIYELSPEELAKVPSTPGSLELALEALENDHAFLTESGVFTEDFIQNWIEYKLVNEVKQLQLRPHPYEFYLYYDC.

The 86-residue stretch at 14–99 folds into the GS beta-grasp domain; sequence QKIQMIDLKF…ICSIKEPRTG (86 aa). Residues 106–471 form the GS catalytic domain; it reads PRVIAQKAID…PYEFYLYYDC (366 aa). Mg(2+) contacts are provided by Glu-131 and Glu-133. Glu-208 contacts ATP. Mg(2+) contacts are provided by Glu-213 and Glu-221. L-glutamate-binding positions include 265–266 and Gly-266; that span reads NG. His-270 lines the Mg(2+) pocket. Residues 272–274 and Ser-274 contribute to the ATP site; that span reads HQS. L-glutamate is bound by residues Arg-322, Glu-328, and Arg-340. Residues Arg-340, Arg-345, and Lys-354 each contribute to the ATP site. Glu-359 provides a ligand contact to Mg(2+). Arg-361 is an L-glutamate binding site. At Tyr-399 the chain carries O-AMP-tyrosine.

This sequence belongs to the glutamine synthetase family. As to quaternary structure, oligomer of 12 subunits arranged in the form of two hexagons. Mg(2+) is required as a cofactor.

Its subcellular location is the cytoplasm. It catalyses the reaction L-glutamate + NH4(+) + ATP = L-glutamine + ADP + phosphate + H(+). Its activity is regulated as follows. The activity of this enzyme could be controlled by adenylation under conditions of abundant glutamine. In terms of biological role, involved in nitrogen metabolism via ammonium assimilation. Catalyzes the ATP-dependent biosynthesis of glutamine from glutamate and ammonia. This is Glutamine synthetase from Microchaete diplosiphon (Fremyella diplosiphon).